A 684-amino-acid chain; its full sequence is MSKKGTIGVTSDNIFPVIKKFLYSDHKIFLREIVSNAVDATQKLKTLTSVGEFKGETGDLRVTVSVDEVARTITVSDRGVGMTEEEVEKYINQIAFSSAEEFLEKYKDDKAAIIGHFGLGFYSAFMVSERVDVITRSFREDATAVKWSCDGSPEYTLEPADKADRGTDIVMHIDEENSEFLKKEKIEGLLGKYCKFLTVPIIFGKKQEWKDGKMQDTDEDNQINDTHPAWTKKPADLKDEDYKEFYRSLYPMSEEPLFWIHLNVDYPFNLTGILYFPKIKNNLDLQRNKIQLYCNQVYVTDEVQGIVPDFLTLLHGVIDSPDIPLNVSRSYLQSDANVKKISSHITKKVADRLEEIFKNDRPTFEEKWDSLKLFVEYGMLTDEKFYERAAKFFLFTDMDGHKYTFDEYRTLVEGVQTDKDGQVVYLYATDKHGQYSHVKRASDKGYSVMLLDGQLDPHIVSLLEQKLEKTHFVRVDSDTINNLIRKEERAEVKLSDTERATLVKLFEARLPRDEKKHFNVAFESLGAEGEAILITQAEFMRRMRDMAQLQPGMSFYGELPDSYNLVLNTDHPLIDKVLSGEKESVEPSLTELRAKIAELKTEEAKLLDEEKGKKPEEIPVATKEAKENNAVEQAKTEGSINDQLTKYAQDNELIGQLIDLALLGSGLLTGEALAEFIRRSQRLL.

Residues 1 to 329 (MSKKGTIGVT…SPDIPLNVSR (329 aa)) form an a; substrate-binding region. The tract at residues 330-548 (SYLQSDANVK…FMRRMRDMAQ (219 aa)) is b. Residues 549 to 684 (LQPGMSFYGE…EFIRRSQRLL (136 aa)) form a c region.

This sequence belongs to the heat shock protein 90 family. In terms of assembly, homodimer.

It localises to the cytoplasm. In terms of biological role, molecular chaperone. Has ATPase activity. This chain is Chaperone protein HtpG, found in Porphyromonas gingivalis (strain ATCC 33277 / DSM 20709 / CIP 103683 / JCM 12257 / NCTC 11834 / 2561).